We begin with the raw amino-acid sequence, 70 residues long: MFGLGGQELLLILLIILLLFGAKKLPELAKGLGKGMKEFKKAQTEIEDEFNKAMSDPPEKKEKESPSDKG.

Residues 1 to 21 (MFGLGGQELLLILLIILLLFG) form a helical membrane-spanning segment. Residues 47–70 (EDEFNKAMSDPPEKKEKESPSDKG) form a disordered region. The span at 57–70 (PPEKKEKESPSDKG) shows a compositional bias: basic and acidic residues.

It belongs to the TatA/E family. As to quaternary structure, forms a complex with TatC.

The protein resides in the cell inner membrane. Part of the twin-arginine translocation (Tat) system that transports large folded proteins containing a characteristic twin-arginine motif in their signal peptide across membranes. TatA could form the protein-conducting channel of the Tat system. The protein is Sec-independent protein translocase protein TatA of Prosthecochloris aestuarii (strain DSM 271 / SK 413).